We begin with the raw amino-acid sequence, 546 residues long: DDB1- and CUL4-associated factor 11 (546 aa).

Over residues 1–10 (MGSRNSSSAG) the composition is skewed to polar residues. Residues 1 to 40 (MGSRNSSSAGTGSGDPSEGLPRRGAGLRRSEEEEEEDEDV) form a disordered region. Residues Ser73 and Ser75 each carry the phosphoserine modification. The tract at residues 79–100 (HDSAWDGRLGDRYNPPVDATPD) is disordered. The segment covering 80–89 (DSAWDGRLGD) has biased composition (basic and acidic residues). 7 WD repeats span residues 170–210 (TYSQ…RKFK), 216–258 (DVGW…TALD), 263–302 (ERRF…RTLQ), 305–345 (SHED…EDDP), 353–392 (GHQD…SREG), 435–480 (GVLH…KKLT), and 481–520 (THKA…YFQD). The tract at residues 521 to 546 (DMPESEEHPSTPAPMSHPSTAFSSPQ) is disordered. The span at 537 to 546 (HPSTAFSSPQ) shows a compositional bias: polar residues.

Interacts with DDB1 and CUL4A.

It participates in protein modification; protein ubiquitination. Its function is as follows. May function as a substrate receptor for CUL4-DDB1 E3 ubiquitin-protein ligase complex. The protein is DDB1- and CUL4-associated factor 11 (DCAF11) of Bos taurus (Bovine).